A 943-amino-acid polypeptide reads, in one-letter code: Netrin receptor UNC5B-a (943 aa).

Residues 1 to 30 form the signal peptide; the sequence is MYLSRNPSGAALAAILVALILSCNFPSSTA. The Extracellular segment spans residues 31–380; the sequence is GIEYSDVLPD…LESTGDVALY (350 aa). The Ig-like domain occupies 51-148; sequence PHFLLEPEDA…AGTTKSKRSY (98 aa). Cystine bridges form between Cys-72–Cys-133, Cys-84–Cys-131, Cys-177–Cys-228, Cys-261–Cys-298, Cys-265–Cys-302, Cys-276–Cys-288, Cys-317–Cys-351, Cys-321–Cys-356, and Cys-329–Cys-341. One can recognise an Ig-like C2-type domain in the interval 150-245; that stretch reads RIAYLRKNFD…KRRSTTATVI (96 aa). Asn-225 carries N-linked (GlcNAc...) asparagine glycosylation. TSP type-1 domains follow at residues 249–303 and 305–357; these read NGGW…TMCP and DGGW…GLCM. Asn-350 is a glycosylation site (N-linked (GlcNAc...) asparagine). A helical membrane pass occupies residues 381-401; sequence AGLVVAIFIVIILLMAVGIVV. Residues 402-943 are Cytoplasmic-facing; that stretch reads YRRNCREFDT…MLVMATDGDC (542 aa). One can recognise a ZU5 domain in the interval 542 to 685; sequence NSVTGTFGSL…LGTYAFVGES (144 aa). The interval 688–836 is UPA domain; that stretch reads RSAIKRLQLA…LEENVKSFDP (149 aa). Residues 863–941 enclose the Death domain; sequence KICNSLDAPN…EMMLVMATDG (79 aa).

Belongs to the unc-5 family. As to quaternary structure, interacts (via extracellular domain) with flrt3 (via extracellular domain). Interacts with rnd1. Phosphorylated on cytoplasmic tyrosine residues. In terms of tissue distribution, in the developing visual system, it is expressed within the developing optic vesicles and later become restricted to the dorsal ciliary marginal zone, a site of retinoblast proliferation and differentiation.

The protein resides in the cell membrane. Functionally, plays a role in cell-cell adhesion during embryonic development. Receptor for netrin required for axon guidance. Mediates axon repulsion of neuronal growth cones in the developing nervous system upon ligand binding. The polypeptide is Netrin receptor UNC5B-a (unc5b-a) (Xenopus laevis (African clawed frog)).